The sequence spans 143 residues: uncharacterized protein (143 aa).

One can recognise an HTH marR-type domain in the interval 11-139; sequence EYELTTFIRR…FGELLQRMNK (129 aa). Residues 53 to 76 constitute a DNA-binding region (H-T-H motif); it reads VKELAESFKLDISTLSRQAAALEA.

This is an uncharacterized protein from Bacillus subtilis (strain 168).